A 364-amino-acid chain; its full sequence is GDSL esterase/lipase EXL3 (364 aa).

Residues Met-1 to Ala-32 form the signal peptide. Residue Ser-50 is the Nucleophile of the active site. Active-site residues include Asp-339 and His-342.

Belongs to the 'GDSL' lipolytic enzyme family. Flower buds.

The protein resides in the secreted. The polypeptide is GDSL esterase/lipase EXL3 (EXL3) (Arabidopsis thaliana (Mouse-ear cress)).